Here is a 365-residue protein sequence, read N- to C-terminus: RISC-loading complex subunit TARBP2 (365 aa).

Sufficient for interaction with PRKRA regions lie at residues 22 to 105, 151 to 233, and 286 to 365; these read MLAA…EPAL, SPQQ…DARD, and LGAL…AGSK. Residues 30–97 enclose the DRBM 1 domain; it reads TPISLLQEYG…AEVALKHLKG (68 aa). A Phosphoserine modification is found at Ser151. 2 consecutive DRBM domains span residues 158–226 and 292–360; these read NPVG…RVHT and ACCS…YLRI. Positions 227-365 are sufficient for interaction with DICER1; sequence VPLDARDGNE…QYLRIMAGSK (139 aa).

Belongs to the TARBP2 family. As to quaternary structure, self-associates. Component of the RISC loading complex (RLC), or micro-RNA (miRNA) loading complex (miRLC), which is composed of DICER1, AGO2 and TARBP2. Note that the trimeric RLC/miRLC is also referred to as RISC. Interacts with EIF2AK2/PKR and inhibits its protein kinase activity. Interacts with DHX9. Interacts with DICER1 and PRKRA. Interacts with DICER1, AGO2, MOV10, EIF6 and RPL7A (60S ribosome subunit); they form a large RNA-induced silencing complex (RISC). Interacts with IRF7; this interaction prevents IRF7 phosphorylation and activation.

It is found in the cytoplasm. The protein resides in the perinuclear region. Its subcellular location is the nucleus. Functionally, required for formation of the RNA induced silencing complex (RISC). Component of the RISC loading complex (RLC), also known as the micro-RNA (miRNA) loading complex (miRLC), which is composed of DICER1, AGO2 and TARBP2. Within the RLC/miRLC, DICER1 and TARBP2 are required to process precursor miRNAs (pre-miRNAs) to mature miRNAs and then load them onto AGO2. AGO2 bound to the mature miRNA constitutes the minimal RISC and may subsequently dissociate from DICER1 and TARBP2. May also play a role in the production of short interfering RNAs (siRNAs) from double-stranded RNA (dsRNA) by DICER1. Binds in vitro to the PRM1 3'-UTR. Seems to act as a repressor of translation. For some pre-miRNA substrates, may also alter the choice of cleavage site by DICER1. Negatively regulates IRF7-mediated IFN-beta signaling triggered by viral infection by inhibiting the phosphorylation of IRF7 and promoting its 'Lys'-48-linked ubiquitination and degradation. This chain is RISC-loading complex subunit TARBP2 (Tarbp2), found in Mus musculus (Mouse).